Here is a 241-residue protein sequence, read N- to C-terminus: ATP synthase subunit a (241 aa).

5 helical membrane passes run 30–50, 91–111, 128–148, 193–213, and 214–234; these read GQVFMTSWILIGALLTLVVVG, FIGTLFLFIFVSNWGGALIPW, INTTVALALLVSLSYFYAGLS, LVVAVLVFLVPLVLPVPVMFL, and GLFTSAIQALIFATLAAYYIG.

It belongs to the ATPase A chain family. F-type ATPases have 2 components, CF(1) - the catalytic core - and CF(0) - the membrane proton channel. CF(1) has five subunits: alpha(3), beta(3), gamma(1), delta(1), epsilon(1). CF(0) has four main subunits: a, b, b' and c.

It localises to the cellular thylakoid membrane. Its function is as follows. Key component of the proton channel; it plays a direct role in the translocation of protons across the membrane. This Prochlorococcus marinus (strain SARG / CCMP1375 / SS120) protein is ATP synthase subunit a.